Here is a 303-residue protein sequence, read N- to C-terminus: tRNA dimethylallyltransferase (303 aa).

13 to 20 (GPTASGKS) serves as a coordination point for ATP. Residue 15-20 (TASGKS) participates in substrate binding. Interaction with substrate tRNA stretches follow at residues 38 to 41 (DSMQ) and 162 to 166 (QRLLR).

The protein belongs to the IPP transferase family. As to quaternary structure, monomer. The cofactor is Mg(2+).

The enzyme catalyses adenosine(37) in tRNA + dimethylallyl diphosphate = N(6)-dimethylallyladenosine(37) in tRNA + diphosphate. Its function is as follows. Catalyzes the transfer of a dimethylallyl group onto the adenine at position 37 in tRNAs that read codons beginning with uridine, leading to the formation of N6-(dimethylallyl)adenosine (i(6)A). The polypeptide is tRNA dimethylallyltransferase (Methylocella silvestris (strain DSM 15510 / CIP 108128 / LMG 27833 / NCIMB 13906 / BL2)).